The primary structure comprises 322 residues: Aspartate carbamoyltransferase catalytic subunit (322 aa).

Carbamoyl phosphate-binding residues include R65 and T66. K93 is an L-aspartate binding site. Positions 115, 143, and 146 each coordinate carbamoyl phosphate. Residues R176 and R230 each coordinate L-aspartate. Carbamoyl phosphate is bound by residues G271 and P272.

The protein belongs to the aspartate/ornithine carbamoyltransferase superfamily. ATCase family. In terms of assembly, heterododecamer (2C3:3R2) of six catalytic PyrB chains organized as two trimers (C3), and six regulatory PyrI chains organized as three dimers (R2).

The catalysed reaction is carbamoyl phosphate + L-aspartate = N-carbamoyl-L-aspartate + phosphate + H(+). The protein operates within pyrimidine metabolism; UMP biosynthesis via de novo pathway; (S)-dihydroorotate from bicarbonate: step 2/3. Its function is as follows. Catalyzes the condensation of carbamoyl phosphate and aspartate to form carbamoyl aspartate and inorganic phosphate, the committed step in the de novo pyrimidine nucleotide biosynthesis pathway. This is Aspartate carbamoyltransferase catalytic subunit from Brucella abortus (strain S19).